A 618-amino-acid chain; its full sequence is Proline--tRNA ligase (618 aa).

It belongs to the class-II aminoacyl-tRNA synthetase family. ProS type 1 subfamily. Homodimer.

Its subcellular location is the cytoplasm. The catalysed reaction is tRNA(Pro) + L-proline + ATP = L-prolyl-tRNA(Pro) + AMP + diphosphate. Functionally, catalyzes the attachment of proline to tRNA(Pro) in a two-step reaction: proline is first activated by ATP to form Pro-AMP and then transferred to the acceptor end of tRNA(Pro). As ProRS can inadvertently accommodate and process non-cognate amino acids such as alanine and cysteine, to avoid such errors it has two additional distinct editing activities against alanine. One activity is designated as 'pretransfer' editing and involves the tRNA(Pro)-independent hydrolysis of activated Ala-AMP. The other activity is designated 'posttransfer' editing and involves deacylation of mischarged Ala-tRNA(Pro). The misacylated Cys-tRNA(Pro) is not edited by ProRS. This is Proline--tRNA ligase from Streptococcus equi subsp. zooepidemicus (strain H70).